We begin with the raw amino-acid sequence, 332 residues long: Ketol-acid reductoisomerase (NADP(+)) (332 aa).

Residues 4–184 (ARMYYDEDAD…GGTRAGILET (181 aa)) enclose the KARI N-terminal Rossmann domain. Residues 27–30 (YGSQ), S53, S55, and 85–88 (DEVQ) each bind NADP(+). H110 is a catalytic residue. Residue G136 coordinates NADP(+). The KARI C-terminal knotted domain occupies 185 to 330 (TFREEAETDL…ADLRKMMSWL (146 aa)). Mg(2+) is bound by residues D193, E197, E229, and E233. A substrate-binding site is contributed by S254.

The protein belongs to the ketol-acid reductoisomerase family. Requires Mg(2+) as cofactor.

It catalyses the reaction (2R)-2,3-dihydroxy-3-methylbutanoate + NADP(+) = (2S)-2-acetolactate + NADPH + H(+). The enzyme catalyses (2R,3R)-2,3-dihydroxy-3-methylpentanoate + NADP(+) = (S)-2-ethyl-2-hydroxy-3-oxobutanoate + NADPH + H(+). The protein operates within amino-acid biosynthesis; L-isoleucine biosynthesis; L-isoleucine from 2-oxobutanoate: step 2/4. Its pathway is amino-acid biosynthesis; L-valine biosynthesis; L-valine from pyruvate: step 2/4. In terms of biological role, involved in the biosynthesis of branched-chain amino acids (BCAA). Catalyzes an alkyl-migration followed by a ketol-acid reduction of (S)-2-acetolactate (S2AL) to yield (R)-2,3-dihydroxy-isovalerate. In the isomerase reaction, S2AL is rearranged via a Mg-dependent methyl migration to produce 3-hydroxy-3-methyl-2-ketobutyrate (HMKB). In the reductase reaction, this 2-ketoacid undergoes a metal-dependent reduction by NADPH to yield (R)-2,3-dihydroxy-isovalerate. The chain is Ketol-acid reductoisomerase (NADP(+)) from Gloeobacter violaceus (strain ATCC 29082 / PCC 7421).